Here is a 166-residue protein sequence, read N- to C-terminus: Small ribosomal subunit protein uS9 (166 aa).

Residues Met1–Glu16 show a composition bias toward acidic residues. A disordered region spans residues Met1–Gly45.

The protein belongs to the universal ribosomal protein uS9 family.

The polypeptide is Small ribosomal subunit protein uS9 (Nocardioides sp. (strain ATCC BAA-499 / JS614)).